A 107-amino-acid polypeptide reads, in one-letter code: Phosphoribosyl-ATP pyrophosphatase (107 aa).

The protein belongs to the PRA-PH family.

It is found in the cytoplasm. The enzyme catalyses 1-(5-phospho-beta-D-ribosyl)-ATP + H2O = 1-(5-phospho-beta-D-ribosyl)-5'-AMP + diphosphate + H(+). It functions in the pathway amino-acid biosynthesis; L-histidine biosynthesis; L-histidine from 5-phospho-alpha-D-ribose 1-diphosphate: step 2/9. This is Phosphoribosyl-ATP pyrophosphatase from Bacillus cereus (strain Q1).